A 282-amino-acid chain; its full sequence is Uridylate-specific endoribonuclease B (282 aa).

One can recognise an EndoU domain in the interval 4-278; the sequence is GDRELSALIQ…IGTTYPVPVK (275 aa). Residues H156, H172, and K218 contribute to the active site.

It belongs to the ENDOU family. In terms of assembly, monomer. Requires Mn(2+) as cofactor.

It carries out the reaction ribonucleotidyl-uridine-RNA = a 5'-end dephospho-uridine-RNA + a 3'-end 2',3'-cyclophospho-ribonucleotide-RNA. Functionally, endoribonuclease that cleaves single-stranded RNAs at 5' of uridylates and releases a product with a 2',3'-cyclic phosphate at the 3'-end. The UU and GU sites are more efficiently cleaved than CU and AU sites. The polypeptide is Uridylate-specific endoribonuclease B (endoub) (Danio rerio (Zebrafish)).